The primary structure comprises 236 residues: tRNA (guanine-N(7)-)-methyltransferase (236 aa).

S-adenosyl-L-methionine-binding residues include D35, E60, N87, and D113. The active site involves D113. Residues K117 and D149 each coordinate substrate. The disordered stretch occupies residues E217–A236.

Belongs to the class I-like SAM-binding methyltransferase superfamily. TrmB family.

It catalyses the reaction guanosine(46) in tRNA + S-adenosyl-L-methionine = N(7)-methylguanosine(46) in tRNA + S-adenosyl-L-homocysteine. It participates in tRNA modification; N(7)-methylguanine-tRNA biosynthesis. Its function is as follows. Catalyzes the formation of N(7)-methylguanine at position 46 (m7G46) in tRNA. This chain is tRNA (guanine-N(7)-)-methyltransferase, found in Synechococcus sp. (strain CC9902).